The following is a 396-amino-acid chain: Phosphoglycerate kinase (396 aa).

Residues 21-23, Arg36, 59-62, Arg119, and Arg156 contribute to the substrate site; these read DFN and HLGK. Residues Lys206, Gly294, Glu325, and 352–355 contribute to the ATP site; that span reads GGDS.

It belongs to the phosphoglycerate kinase family. Monomer.

The protein resides in the cytoplasm. It catalyses the reaction (2R)-3-phosphoglycerate + ATP = (2R)-3-phospho-glyceroyl phosphate + ADP. It functions in the pathway carbohydrate degradation; glycolysis; pyruvate from D-glyceraldehyde 3-phosphate: step 2/5. The polypeptide is Phosphoglycerate kinase (Listeria innocua serovar 6a (strain ATCC BAA-680 / CLIP 11262)).